We begin with the raw amino-acid sequence, 223 residues long: Serum amyloid P-component (223 aa).

An N-terminal signal peptide occupies residues 1 to 19 (MDKMLFWVSVFTIFLDVFA). A Pentraxin (PTX) domain is found at 24-223 (DKKVFVFPRE…YVIIKPRVWD (200 aa)). A disulfide bond links C55 and C114. Ca(2+)-binding residues include D77, N78, E155, Q156, D157, and Q167. Residue N198 is glycosylated (N-linked (GlcNAc...) asparagine).

This sequence belongs to the pentraxin family. In terms of assembly, homopentamer. Pentraxin (or pentaxin) have a discoid arrangement of 5 non-covalently bound subunits. Requires Ca(2+) as cofactor.

The protein resides in the secreted. The chain is Serum amyloid P-component (PTX2) from Cavia porcellus (Guinea pig).